The following is a 439-amino-acid chain: Vacuolar protein sorting-associated protein 4 (439 aa).

One can recognise an MIT domain in the interval 8–75 (LSKGIDLVQK…TRAEQLKDHL (68 aa)). The tract at residues 76-113 (EKQAQNKSTAESSVNGSTKAKKSNGDGNGSGDDNDDAD) is disordered. Residues 80-93 (QNKSTAESSVNGST) show a composition bias toward polar residues. ATP is bound at residue 175 to 182 (GPPGTGKS).

This sequence belongs to the AAA ATPase family. As to quaternary structure, monomer or homodimer (in nucleotide-free form). Decamer, dodecamer or tetradecamer of two stacked respective homooligomeric rings (when bound to ATP); the dodecameric form seems to be predominant.

The protein localises to the endosome membrane. Pre-vacuolar protein sorting protein involved in the transport of biosynthetic membrane proteins from the prevacuolar/endosomal compartment to the vacuole. Required for multivesicular body (MVB) protein sorting. Catalyzes the ATP-dependent dissociation of class E VPS proteins from endosomal membranes, such as the disassembly of the ESCRT-III complex. Required for extracellular secretion of the secreted aspartyl proteases SAP2, SAP4, SAP5, and SAP6. Its regulation of the pre-vacuolar secretory pathway is critical for virulence. This Candida albicans (strain SC5314 / ATCC MYA-2876) (Yeast) protein is Vacuolar protein sorting-associated protein 4.